A 347-amino-acid chain; its full sequence is Dihydroorotase (347 aa).

Zn(2+) is bound by residues His14 and His16. Substrate-binding positions include 16–18 (HLR) and Asn42. Zn(2+) is bound by residues Lys100, His137, and His175. Lys100 is modified (N6-carboxylysine). His137 is a binding site for substrate. Leu220 contributes to the substrate binding site. Asp248 contributes to the Zn(2+) binding site. Residue Asp248 is part of the active site. Substrate is bound by residues His252 and Ala264.

It belongs to the metallo-dependent hydrolases superfamily. DHOase family. Class II DHOase subfamily. As to quaternary structure, homodimer. It depends on Zn(2+) as a cofactor.

The catalysed reaction is (S)-dihydroorotate + H2O = N-carbamoyl-L-aspartate + H(+). It functions in the pathway pyrimidine metabolism; UMP biosynthesis via de novo pathway; (S)-dihydroorotate from bicarbonate: step 3/3. Functionally, catalyzes the reversible cyclization of carbamoyl aspartate to dihydroorotate. The polypeptide is Dihydroorotase (Stutzerimonas stutzeri (strain A1501) (Pseudomonas stutzeri)).